Reading from the N-terminus, the 275-residue chain is Large ribosomal subunit protein uL2 (275 aa).

A disordered region spans residues 227 to 261; sequence PVDHPHGGGEAKSGQGNPHPVTPWGVPTKGYKTRK.

The protein belongs to the universal ribosomal protein uL2 family. Part of the 50S ribosomal subunit. Forms a bridge to the 30S subunit in the 70S ribosome.

In terms of biological role, one of the primary rRNA binding proteins. Required for association of the 30S and 50S subunits to form the 70S ribosome, for tRNA binding and peptide bond formation. It has been suggested to have peptidyltransferase activity; this is somewhat controversial. Makes several contacts with the 16S rRNA in the 70S ribosome. This Xylella fastidiosa (strain M23) protein is Large ribosomal subunit protein uL2.